We begin with the raw amino-acid sequence, 151 residues long: ALK and LTK ligand 2 (151 aa).

A signal peptide spans 1–25; the sequence is MRVSGRPMLLALLLLLSTVGDPGHA. 2 disulfides stabilise this stretch: cysteine 112–cysteine 148 and cysteine 126–cysteine 135.

The protein belongs to the ALKAL family. Homodimer.

It is found in the secreted. Its subcellular location is the cell membrane. Cytokine that acts as a physiological ligand for receptor tyrosine kinases LTK and ALK, leading to their activation. Cytokine-binding is sufficient to activate LTK. In contrast, ALKAL2-driven activation of ALK is coupled with heparin-binding to ALK. Stimulation of ALK signaling is involved in neural development and regulation of energy expenditure. This is ALK and LTK ligand 2 from Rattus norvegicus (Rat).